We begin with the raw amino-acid sequence, 156 residues long: Rhodanese-like domain-containing protein 17 (156 aa).

Residues 44–146 (LDSGYTFLDV…WVNKRFPVKV (103 aa)) enclose the Rhodanese domain. Residue Cys106 is the Cysteine persulfide intermediate of the active site.

The polypeptide is Rhodanese-like domain-containing protein 17 (STR17) (Arabidopsis thaliana (Mouse-ear cress)).